The chain runs to 124 residues: CBS domain-containing protein MJ0729 (124 aa).

CBS domains follow at residues methionine 10–leucine 67 and leucine 70–arginine 124.

In terms of assembly, exhibits a pH-dependent oligomerization state: at pH 7, the dominant species is a dimer, where each monomer is a two-CBS domain protein, and at pH 4.5-4.8, the dominant species is a tetramer, with an oblong shape. At pH 2.5, there is formation of intermolecular hydrogen bonds, suggesting the presence of high-molecular weight species. The physiological dimeric species is thermal and chemically very stable.

In Methanocaldococcus jannaschii (strain ATCC 43067 / DSM 2661 / JAL-1 / JCM 10045 / NBRC 100440) (Methanococcus jannaschii), this protein is CBS domain-containing protein MJ0729.